We begin with the raw amino-acid sequence, 348 residues long: MSAKVGVLLSGGVDSAVALYLLIEKGYEVTAYHMKTVRDELYITKQIKHKVCCSPSDTHDAQLIAKKFGVPFKIIHVEDVFKEKIIDYFISENLAGKTPNPCFFCNDYIKFGFVMDVALSDGMDFVASGHYARILNGKLYRALDKEKDQSYFLASIKKEKLSKILLPNGEYSKETIRDIAERAGIHVAKKIDSQDLCFLPDNDFKSFFEERGVKIEPGNIITSEGKIIGKHEGLPFYTIGQRKLGVAAGQKLYVKAKNVEGNFIVVSPLDEVYQNEMRVKNLNIYVDLPDEFLATVKIRKKFKEVPCRVEYLKDELKVQFLEPVFAVTPGQIAVFYNEDEVLCSGVIE.

Residues 8-15 (LLSGGVDS) and Met-34 each bind ATP. The active-site Nucleophile is the Cys-105. Cysteines 105 and 197 form a disulfide. Position 129 (Gly-129) interacts with ATP. Positions 147–149 (KDQ) are interaction with tRNA. Cys-197 serves as the catalytic Cysteine persulfide intermediate.

Belongs to the MnmA/TRMU family.

Its subcellular location is the cytoplasm. The enzyme catalyses S-sulfanyl-L-cysteinyl-[protein] + uridine(34) in tRNA + AH2 + ATP = 2-thiouridine(34) in tRNA + L-cysteinyl-[protein] + A + AMP + diphosphate + H(+). Its function is as follows. Catalyzes the 2-thiolation of uridine at the wobble position (U34) of tRNA, leading to the formation of s(2)U34. In Fervidobacterium nodosum (strain ATCC 35602 / DSM 5306 / Rt17-B1), this protein is tRNA-specific 2-thiouridylase MnmA.